Consider the following 308-residue polypeptide: Taste receptor type 2 member 43 (308 aa).

Met1 is a topological domain (extracellular). The helical transmembrane segment at 2–22 threads the bilayer; it reads ITFLPIIFSILVVFTFVIGNF. At 23–46 the chain is on the cytoplasmic side; sequence ANGFIALVNSIEWVKRQKISFADQ. The helical transmembrane segment at 47 to 67 threads the bilayer; the sequence is ILTALAVSRVGLLWILLLNWY. The Extracellular segment spans residues 68–86; that stretch reads STVLNPAFYSVEVRTIAYN. A helical transmembrane segment spans residues 87–107; it reads LWAVINHFSNWLATSLSIFYL. At 108-126 the chain is on the cytoplasmic side; the sequence is LKIANFSNLIFLHLRRRVK. The helical transmembrane segment at 127–147 threads the bilayer; that stretch reads SVVLVILWGPLLFLVCHLFVV. Over 148–178 the chain is Extracellular; the sequence is NMNEIIQTKEYEGNMTWKSKLRSAMYLSNTT. N-linked (GlcNAc...) asparagine glycosylation is found at Asn161 and Asn176. Residues 179-199 traverse the membrane as a helical segment; the sequence is VTILANLVPFILTLISFLLLI. The Cytoplasmic segment spans residues 200-229; the sequence is CSLCKHLKKMQLRDKGSQDPSTKVHIKALQ. Residues 230 to 249 traverse the membrane as a helical segment; sequence TVISLSLCAIYFLSIMISSW. At 250–258 the chain is on the extracellular side; it reads SLGRVENKA. Residues 259–279 form a helical membrane-spanning segment; it reads IFMFCKAIRFSYPSAHAFILI. Residues 280-308 are Cytoplasmic-facing; the sequence is WGNKKLKQTLLSVLWNVRYCVKGQKLQSP.

It belongs to the G-protein coupled receptor T2R family.

The protein resides in the membrane. It is found in the cell projection. The protein localises to the cilium membrane. Its function is as follows. Gustducin-coupled receptor immplicated in the perception of bitter compounds in the oral cavity and the gastrointestinal tract. Signals through PLCB2 and the calcium-regulated cation channel TRPM5. Activated by the sulfonyl amide sweeteners saccharin and acesulfame K. In airway epithelial cells, binding of bitter compounds increases the intracellular calcium ion concentration and stimulates ciliary beat frequency. May act as chemosensory receptors in airway epithelial cells to detect and eliminate potential noxious agents from the airways. The sequence is that of Taste receptor type 2 member 43 (TAS2R43) from Macaca mulatta (Rhesus macaque).